The chain runs to 76 residues: Sea anemone sodium channel inhibitor type I (76 aa).

A signal peptide spans 1 to 19 (MNRMLIIFVVVTVFGLASG). Positions 20–30 (LGPNMPAPDLA) are excised as a propeptide. 3 disulfides stabilise this stretch: Cys37-Cys72, Cys39-Cys60, and Cys53-Cys73.

This sequence belongs to the sea anemone sodium channel inhibitory toxin family. Type I subfamily. As to expression, expressed in acontia, a specialised envenomation structure laden with batteries of venom-containing nematocysts found only in the superfamily Metridioidea.

It localises to the secreted. The protein localises to the nematocyst. May affect sodium channels (Nav). In Calliactis polypus (Hermit crab anemone), this protein is Sea anemone sodium channel inhibitor type I.